A 633-amino-acid polypeptide reads, in one-letter code: NBPF family member NBPF3 (633 aa).

The interval 15–52 is disordered; sequence RGPDVETSPFGAPRAASHGVGRHQELRDPTVPGPTSSA. Residues 127-186 are a coiled coil; it reads LRDERLLTEEKLAEELGQAEELRQYKVLVHSQERELTQLREKLQEGRDASRSLNQHLQAL. Olduvai domains follow at residues 221-313, 314-402, 405-460, 461-552, and 555-633; these read ENDD…CIIP, ENES…ATSP, SREL…LDLD, RMKK…PPCP, and NEVL…IFPH. Residues 316-326 show a composition bias toward basic and acidic residues; it reads ESDHEQEEEKG. Positions 316-370 are disordered; it reads ESDHEQEEEKGPVSPRNLQESEEEEAPQESWDEGDWTLSIPPDMSASYQSDRSTF. Residues 335 to 350 are compositionally biased toward acidic residues; it reads ESEEEEAPQESWDEGD. A disordered region spans residues 463–484; sequence KKDQEEEEDQGPPCPRLSRELP.

This sequence belongs to the NBPF family. In terms of tissue distribution, expressed in testis and fetal heart, as well as in non small cell lung carcinoma and neuroblastoma cell line.

The protein resides in the cytoplasm. In Homo sapiens (Human), this protein is NBPF family member NBPF3.